A 754-amino-acid polypeptide reads, in one-letter code: Endoribonuclease Dicer-like (754 aa).

The PAZ domain occupies 132–251 (QLMCDAKRLS…LPPELCLLLP (120 aa)). RNase III domains follow at residues 298-418 (FAIT…TGPN) and 613-734 (AQTV…LACG). Residues Glu336, Asp404, Glu407, Glu649, Asp720, and Glu723 each coordinate Mn(2+).

Homodimer. It depends on Mg(2+) as a cofactor. Requires Mn(2+) as cofactor.

Functionally, involved in cleaving double-stranded RNA in the RNA interference (RNAi) pathway. It produces 21 to 23 bp dsRNAs (siRNAs) which target the selective destruction of homologous RNAs. This chain is Endoribonuclease Dicer-like, found in Giardia intestinalis (strain ATCC 50803 / WB clone C6) (Giardia lamblia).